Consider the following 349-residue polypeptide: ATP synthase subunit a-2 (349 aa).

Positions 1–97 (MERLTRLNHF…SNYMKLMEIP (97 aa)) are excised as a propeptide. The next 7 helical transmembrane spans lie at 118–138 (FSFT…LLLI), 184–204 (FFPC…QGMI), 213–233 (HFLI…IVGF), 240–260 (FFSF…LVLL), 280–300 (MMAG…MLCM), 303–323 (IFYF…TGLE), and 326–346 (VAIL…NDAI).

This sequence belongs to the ATPase A chain family. As to quaternary structure, F-type ATPases have 2 components, CF(1) - the catalytic core - and CF(0) - the membrane proton channel. CF(1) has five subunits: alpha(3), beta(3), gamma(1), delta(1), epsilon(1). CF(0) has three main subunits: a, b and c.

It localises to the mitochondrion inner membrane. Mitochondrial membrane ATP synthase (F(1)F(0) ATP synthase or Complex V) produces ATP from ADP in the presence of a proton gradient across the membrane which is generated by electron transport complexes of the respiratory chain. F-type ATPases consist of two structural domains, F(1) - containing the extramembraneous catalytic core and F(0) - containing the membrane proton channel, linked together by a central stalk and a peripheral stalk. During catalysis, ATP synthesis in the catalytic domain of F(1) is coupled via a rotary mechanism of the central stalk subunits to proton translocation. Key component of the proton channel; it may play a direct role in the translocation of protons across the membrane. The chain is ATP synthase subunit a-2 (ATP6-2) from Arabidopsis thaliana (Mouse-ear cress).